The following is a 296-amino-acid chain: METIQSVITEWSDSKSWDHLFQHNFKDSNWSELFDPVNFKFKFGTTPFSQFQILPSVISLYLVIIFSIKFLMRNRKPFSLKYVSILHNAILCIWSLVMCVGILYEVIKRITAEGPLFTVCETVSGFDKGPAYYWSYIFYISKFYELLDTVIIVLKKKPLIFLHVYHHCIVVWLCWYFMYSGWNLQLWVVFLNTFVHVFMYYFYFQTGRGKTVWWKKYITMIQIIQFICLGIAGLLHSAAINLNSSPCFTHYPAFISAYLINFSFLFLFSQFFVKSYSNKPTSSSSTTTPTKTKKID.

Helical transmembrane passes span 51–71, 83–103, 134–154, 159–179, 184–204, 220–240, and 253–273; these read FQILPSVISLYLVIIFSIKFL, VSILHNAILCIWSLVMCVGIL, WSYIFYISKFYELLDTVIIVL, LIFLHVYHHCIVVWLCWYFMY, LQLWVVFLNTFVHVFMYYFYF, MIQIIQFICLGIAGLLHSAAI, and AFISAYLINFSFLFLFSQFFV. Low complexity predominate over residues 277 to 290; sequence SNKPTSSSSTTTPT. A disordered region spans residues 277 to 296; sequence SNKPTSSSSTTTPTKTKKID.

This sequence belongs to the ELO family.

Its subcellular location is the membrane. The catalysed reaction is a very-long-chain acyl-CoA + malonyl-CoA + H(+) = a very-long-chain 3-oxoacyl-CoA + CO2 + CoA. In terms of biological role, could be implicated in synthesis of very long chain fatty acids. The chain is Putative fatty acid elongase DDB_G0272012 from Dictyostelium discoideum (Social amoeba).